Consider the following 267-residue polypeptide: Orotidine 5'-phosphate decarboxylase (267 aa).

Ser-2 carries the post-translational modification N-acetylserine. Substrate contacts are provided by residues Asp-37, 59-61, and 91-100; these read KTH and DRKFADIGNT. Lys-93 functions as the Proton donor in the catalytic mechanism. Glycyl lysine isopeptide (Lys-Gly) (interchain with G-Cter in ubiquitin) cross-links involve residues Lys-93 and Lys-209. Tyr-217 and Arg-235 together coordinate substrate. Residue Lys-253 forms a Glycyl lysine isopeptide (Lys-Gly) (interchain with G-Cter in ubiquitin) linkage.

The protein belongs to the OMP decarboxylase family.

It carries out the reaction orotidine 5'-phosphate + H(+) = UMP + CO2. It functions in the pathway pyrimidine metabolism; UMP biosynthesis via de novo pathway; UMP from orotate: step 2/2. The polypeptide is Orotidine 5'-phosphate decarboxylase (URA3) (Saccharomyces cerevisiae (strain ATCC 204508 / S288c) (Baker's yeast)).